A 501-amino-acid chain; its full sequence is Zinc finger protein PLAG1 (501 aa).

Residues 1–30 are disordered; that stretch reads MATVIPGDLSEVRDTQKVPSGKRKRGETKP. A Nuclear localization signal motif is present at residues 22-25; sequence KRKR. 7 consecutive C2H2-type zinc fingers follow at residues 34–56, 62–86, 92–114, 121–143, 150–172, 185–207, and 213–236; these read FPCQ…SYSH, YKCT…MATH, HKCN…LHTH, FKCE…LALH, LTCK…LKTH, HQCE…MVVH, and FLCQ…KKSH. 2 stretches are compositionally biased toward low complexity: residues 366-380 and 455-467; these read SGMP…ASSS and TQLP…PQDP. Disordered stretches follow at residues 366–406 and 447–474; these read SGMP…GSVP and QEEA…IGLG.

This sequence belongs to the krueppel C2H2-type zinc-finger protein family. In terms of tissue distribution, expressed in nephroblastoma.

It is found in the nucleus. Functionally, transcription factor and proto-oncogene whose activation results in up-regulation of target genes, such as IGFII, leading to uncontrolled cell proliferation. The polypeptide is Zinc finger protein PLAG1 (PLAG1) (Gallus gallus (Chicken)).